The primary structure comprises 341 residues: Glyceraldehyde-3-phosphate dehydrogenase 4 (341 aa).

NAD(+) is bound by residues 13–14 (RI), D35, and K85. D-glyceraldehyde 3-phosphate is bound by residues 157 to 159 (SCT), T188, 217 to 218 (TG), and R240. The Nucleophile role is filled by C158. An NAD(+)-binding site is contributed by N322.

It belongs to the glyceraldehyde-3-phosphate dehydrogenase family. Homotetramer.

Its subcellular location is the cytoplasm. It catalyses the reaction D-glyceraldehyde 3-phosphate + phosphate + NAD(+) = (2R)-3-phospho-glyceroyl phosphate + NADH + H(+). The protein operates within carbohydrate degradation; glycolysis; pyruvate from D-glyceraldehyde 3-phosphate: step 1/5. This Caenorhabditis elegans protein is Glyceraldehyde-3-phosphate dehydrogenase 4 (gpd-4).